Here is a 930-residue protein sequence, read N- to C-terminus: Pyruvate dehydrogenase E1 component (930 aa).

The span at 1 to 10 shows a compositional bias: basic and acidic residues; sequence MTTDFARHDL. Positions 1–21 are disordered; the sequence is MTTDFARHDLAQNSNSASEPD. Lys-375 is covalently cross-linked (Isoglutamyl lysine isopeptide (Lys-Gln) (interchain with Q-Cter in protein Pup)).

Homodimer. Part of the PDH complex, consisting of multiple copies of AceE (E1), DlaT (E2) and Lpd (E3). The cofactor is Mg(2+). Requires thiamine diphosphate as cofactor.

The enzyme catalyses N(6)-[(R)-lipoyl]-L-lysyl-[protein] + pyruvate + H(+) = N(6)-[(R)-S(8)-acetyldihydrolipoyl]-L-lysyl-[protein] + CO2. Its function is as follows. Component of the pyruvate dehydrogenase (PDH) complex, that catalyzes the overall conversion of pyruvate to acetyl-CoA and CO(2). AceE has reductase activity with pyruvate but does not react with 2-oxoglutarate. The sequence is that of Pyruvate dehydrogenase E1 component (aceE) from Mycobacterium tuberculosis (strain ATCC 25618 / H37Rv).